We begin with the raw amino-acid sequence, 652 residues long: Carboxypeptidase Z (652 aa).

The signal sequence occupies residues 1–18 (MPPPLPLLLLTVLVVAAA). The 134-residue stretch at 27 to 160 (NPAGECHRPP…TREDEGCYDP (134 aa)) folds into the FZ domain. Cystine bridges form between cysteine 43–cysteine 109, cysteine 51–cysteine 102, cysteine 93–cysteine 129, cysteine 118–cysteine 157, and cysteine 122–cysteine 146. The Peptidase M14 domain occupies 186–502 (SHHSYAQMVR…ESLLNFVETV (317 aa)). Positions 248 and 251 each coordinate Zn(2+). N-linked (GlcNAc...) asparagine glycosylation is present at asparagine 281. Zn(2+) is bound at residue histidine 380. Catalysis depends on glutamate 472, which acts as the Proton donor/acceptor. The segment at 595 to 629 (LRRTGPHDPLGGASSLGEATEPDPLRARRQPSADG) is disordered.

The protein belongs to the peptidase M14 family. The cofactor is Zn(2+). In terms of tissue distribution, in placenta, it is present within invasive trophoblasts and in the surrounding extracellular space. Also present in amnion cells, but is not readily apparent in the extracellular matrix of this cell type. Present in normal pituitary gland and neoplastic pituitary gland (especially POMC-, GH- and PRL-producing adenomas) (at protein level). Widely expressed.

The protein localises to the secreted. It localises to the extracellular space. It is found in the extracellular matrix. Inhibited by 2-mercaptomethyl-3-guanidinoethylthiopropanoic acid (MGTA) and guanidinoethylmercaptosuccinic acid (GEMSA). Inhibited by chelating agents such as EDTA and EGTA. In terms of biological role, cleaves substrates with C-terminal arginine residues. Probably modulates the Wnt signaling pathway, by cleaving some undefined protein. May play a role in cleavage during prohormone processing. This chain is Carboxypeptidase Z (CPZ), found in Homo sapiens (Human).